A 171-amino-acid chain; its full sequence is Co-chaperone protein HscB homolog (171 aa).

In terms of domain architecture, J spans 2 to 74 (NHFELFGLPP…ISRAEYLLSQ (73 aa)).

It belongs to the HscB family. Interacts with HscA and stimulates its ATPase activity.

Co-chaperone involved in the maturation of iron-sulfur cluster-containing proteins. Seems to help targeting proteins to be folded toward HscA. The chain is Co-chaperone protein HscB homolog from Vibrio vulnificus (strain YJ016).